A 101-amino-acid chain; its full sequence is Small ribosomal subunit protein uS14 (101 aa).

This sequence belongs to the universal ribosomal protein uS14 family. As to quaternary structure, part of the 30S ribosomal subunit. Contacts proteins S3 and S10.

Functionally, binds 16S rRNA, required for the assembly of 30S particles and may also be responsible for determining the conformation of the 16S rRNA at the A site. The sequence is that of Small ribosomal subunit protein uS14 from Proteus mirabilis (strain HI4320).